Reading from the N-terminus, the 532-residue chain is BTB/POZ domain-containing protein 3 (532 aa).

The disordered stretch occupies residues 23–54 (KNRSKKSSKKTNTGGGGGGSSSSSSSSSNSKL). Residues 43 to 53 (SSSSSSSSNSK) show a composition bias toward low complexity. The region spanning 130 to 200 (ADVHFVVGPP…IYCDEIDLAA (71 aa)) is the BTB domain. The BACK domain occupies 245–310 (FEEPDLTQRC…NWAEVECQRQ (66 aa)).

As to expression, expressed in visual cortex. Expressed in visual cortex layer IV neurons.

It localises to the cytoplasm. It is found in the cytosol. The protein localises to the nucleus. Functionally, acts as a key regulator of dendritic field orientation during development of sensory cortex. Also directs dendrites toward active axon terminals when ectopically expressed. The polypeptide is BTB/POZ domain-containing protein 3 (BTBD3) (Mustela putorius furo (European domestic ferret)).